We begin with the raw amino-acid sequence, 216 residues long: Probable GTP-binding protein EngB (216 aa).

Residues 37 to 214 enclose the EngB-type G domain; sequence GSVEIAFAGR…RAAMIRLLDE (178 aa). Residues 45-52, 72-76, 92-95, 159-162, and 193-195 each bind GTP; these read GRSNVGKS, GRTQE, DMPG, TKAD, and TSS. Positions 52 and 74 each coordinate Mg(2+).

Belongs to the TRAFAC class TrmE-Era-EngA-EngB-Septin-like GTPase superfamily. EngB GTPase family. Requires Mg(2+) as cofactor.

Necessary for normal cell division and for the maintenance of normal septation. The sequence is that of Probable GTP-binding protein EngB from Rhodopseudomonas palustris (strain ATCC BAA-98 / CGA009).